The following is a 66-amino-acid chain: Scarabaecin (66 aa).

Positions 1 to 26 are cleaved as a signal peptide; it reads MKTLTFYTLLLCAALYSNFFDCKAVA. Cys46 and Cys57 are oxidised to a cystine.

Its subcellular location is the secreted. Functionally, possesses antifungal activity against phytopathogenic fungi such as P.oryzae, R.solani and B.cinerea but not against phytopathogenic bacteria. Shows weak activity against the insect pathogenic fungus B.bassiana and against S.aureus. Binds chitin. This Oryctes rhinoceros (Coconut rhinoceros beetle) protein is Scarabaecin.